A 310-amino-acid polypeptide reads, in one-letter code: Isoflavone reductase homolog A622 (310 aa).

NADP(+) contacts are provided by residues 13–19, R38, and K47; that span reads GGTGYIG. The Proton acceptor role is filled by K135. R139 lines the NADP(+) pocket.

Belongs to the NmrA-type oxidoreductase family. Isoflavone reductase subfamily. In terms of assembly, monomer.

It is found in the cytoplasm. It functions in the pathway alkaloid biosynthesis; nicotine biosynthesis. NADPH-binding protein. Involved in the biosynthesis of pyridine alkaloid natural products, leading mainly to the production of anabasine, anatabine, nicotine and nornicotine, effective deterrents against herbivores with antiparasitic and pesticide properties (neurotoxins); nornicotine serves as the precursor in the synthesis of the carcinogen compound N'-nitrosonornicotine (NNN). Reductase involved in a late step of tobacco alkaloid biosynthesis. Triggers either the formation of a nicotinic acid-derived precursor or the final condensation reaction of tobacco alkaloids. The protein is Isoflavone reductase homolog A622 of Nicotiana glauca (Glaucous tobacco).